A 309-amino-acid polypeptide reads, in one-letter code: Serine/threonine-protein phosphatase 2A catalytic subunit beta isoform (309 aa).

Residues Asp-57, His-59, Asp-85, and Asn-117 each coordinate Mn(2+). The active-site Proton donor is His-118. Mn(2+)-binding residues include His-167 and His-241. Tyr-307 carries the post-translational modification Phosphotyrosine. Residue Leu-309 is modified to Leucine methyl ester.

It belongs to the PPP phosphatase family. PP-1 subfamily. In terms of assembly, PP2A consists of a common heterodimeric core enzyme (composed of a 36 kDa catalytic subunit (subunit C) and a 65 kDa constant regulatory subunit (PR65) (subunit A)) that associates with a variety of regulatory subunits. Proteins that associate with the core dimer include three families of regulatory subunits B (the R2/B/PR55/B55, R3/B''/PR72/PR130/PR59 and R5/B'/B56 families), the 48 kDa variable regulatory subunit, viral proteins, and cell signaling molecules. Binds PPME1. May indirectly interact with SGO1, most probably through regulatory B56 subunits. Interacts with CTTNBP2NL. Interacts with PTPA. Found in a complex with at least ARL2, PPP2CB, PPP2R1A, PPP2R2A, PPP2R5E and TBCD. Interacts with TBCD. Part of the core of STRIPAK complexes composed of PP2A catalytic and scaffolding subunits, the striatins (PP2A regulatory subunits), the striatin-associated proteins MOB4, STRIP1 and STRIP2, PDCD10 and members of the STE20 kinases, such as STK24 and STK26. It depends on Mn(2+) as a cofactor. Post-translationally, reversibly methyl esterified on Leu-309 by leucine carboxyl methyltransferase 1 (Lcmt1) and protein phosphatase methylesterase 1 (Ppme1). Carboxyl methylation influences the affinity of the catalytic subunit for the different regulatory subunits, thereby modulating the PP2A holoenzyme's substrate specificity, enzyme activity and cellular localization. Phosphorylation of either threonine (by autophosphorylation-activated protein kinase) or tyrosine results in inactivation of the phosphatase. Auto-dephosphorylation has been suggested as a mechanism for reactivation. In terms of processing, may be monoubiquitinated by NOSIP.

It is found in the cytoplasm. The protein localises to the nucleus. It localises to the chromosome. The protein resides in the centromere. Its subcellular location is the cytoskeleton. It is found in the spindle pole. The enzyme catalyses O-phospho-L-seryl-[protein] + H2O = L-seryl-[protein] + phosphate. It carries out the reaction O-phospho-L-threonyl-[protein] + H2O = L-threonyl-[protein] + phosphate. In terms of biological role, catalytic subunit of protein phosphatase 2A (PP2A), a serine/threonine phosphatase involved in the regulation of a wide variety of enzymes, signal transduction pathways, and cellular events. PP2A can modulate the activity of phosphorylase B kinase, casein kinase 2, mitogen-stimulated S6 kinase, and MAP-2 kinase. Part of the striatin-interacting phosphatase and kinase (STRIPAK) complexes. STRIPAK complexes have critical roles in protein (de)phosphorylation and are regulators of multiple signaling pathways including Hippo, MAPK, nuclear receptor and cytoskeleton remodeling. Different types of STRIPAK complexes are involved in a variety of biological processes such as cell growth, differentiation, apoptosis, metabolism and immune regulation. The polypeptide is Serine/threonine-protein phosphatase 2A catalytic subunit beta isoform (Ppp2cb) (Mus musculus (Mouse)).